Consider the following 666-residue polypeptide: Protein translocase subunit SecA 2 (666 aa).

Residues Q119, 137–141, and D546 each bind ATP; that span reads GEGKS.

This sequence belongs to the SecA family. Monomer and homodimer. Part of the essential Sec protein translocation apparatus which comprises SecA, SecYEG and auxiliary proteins SecDF-YajC and YidC.

The protein localises to the cell inner membrane. Its subcellular location is the cytoplasm. It catalyses the reaction ATP + H2O + cellular proteinSide 1 = ADP + phosphate + cellular proteinSide 2.. In terms of biological role, part of the Sec protein translocase complex. Interacts with the SecYEG preprotein conducting channel. Has a central role in coupling the hydrolysis of ATP to the transfer of proteins into and across the cell membrane, serving both as a receptor for the preprotein-SecB complex and as an ATP-driven molecular motor driving the stepwise translocation of polypeptide chains across the membrane. The sequence is that of Protein translocase subunit SecA 2 from Nitrosospira multiformis (strain ATCC 25196 / NCIMB 11849 / C 71).